The primary structure comprises 917 residues: Probable dipeptidyl-aminopeptidase B (917 aa).

The span at 1–16 (MATEKGHGRDDEERVP) shows a compositional bias: basic and acidic residues. Positions 1 to 21 (MATEKGHGRDDEERVPLTRGS) are disordered. Topologically, residues 1–99 (MATEKGHGRD…KPMHKSVKIA (99 aa)) are cytoplasmic. The chain crosses the membrane as a helical; Signal-anchor for type II membrane protein span at residues 100–120 (LWTLLFLSLGGWSLAFVLFIF). Over 121-917 (RSHDTYETPI…RAATWAGLSI (797 aa)) the chain is Vacuolar. Asn-135, Asn-351, and Asn-574 each carry an N-linked (GlcNAc...) asparagine glycan. Ser-756 (charge relay system) is an active-site residue. A glycan (N-linked (GlcNAc...) asparagine) is linked at Asn-815. Residues Asp-833 and His-866 each act as charge relay system in the active site. The N-linked (GlcNAc...) asparagine glycan is linked to Asn-902.

The protein belongs to the peptidase S9B family.

It is found in the vacuole membrane. It catalyses the reaction Release of an N-terminal dipeptide, Xaa-Yaa-|-Zaa-, from a polypeptide, preferentially when Yaa is Pro, provided Zaa is neither Pro nor hydroxyproline.. In terms of biological role, type IV dipeptidyl-peptidase which removes N-terminal dipeptides sequentially from polypeptides having unsubstituted N-termini provided that the penultimate residue is proline. This chain is Probable dipeptidyl-aminopeptidase B (DAPB), found in Ajellomyces capsulatus (strain H88) (Darling's disease fungus).